The primary structure comprises 221 residues: GTP-binding nuclear protein Ran-1 (221 aa).

Residues 10–174 enclose the Small GTPase Ran-type domain; that stretch reads DYPSFKLVIV…LYLARKLAGD (165 aa). Position 21–28 (21–28) interacts with GTP; it reads DGGTGKTT. Residues 40-48 are switch-I; the sequence is KKYEPTIGV. GTP is bound by residues Gly-71, 125-128, and 153-155; these read NKVD and SAK. The tract at residues 71–87 is switch-II; that stretch reads GQEKFGGLRDGYYIHGQ.

This sequence belongs to the small GTPase superfamily. Ran family. In terms of assembly, found in a nuclear export complex with RanGTP, exportin and pre-miRNA. Interacts with RANBP1A and RANBP1B. Interacts with TRN1. Interacts with ATX1. Interacts with KPNB1. Binds to XPO1. Interacts with MOS14. Binds to NTF2B.

The protein resides in the nucleus. In terms of biological role, GTP-binding protein involved in nucleocytoplasmic transport. Required for the import of protein into the nucleus and also for RNA export. Involved in chromatin condensation and control of cell cycle. The sequence is that of GTP-binding nuclear protein Ran-1 (RAN1) from Arabidopsis thaliana (Mouse-ear cress).